The following is a 210-amino-acid chain: Thymidylate kinase (210 aa).

Residue 13–20 (GLEGAGKS) participates in ATP binding.

It belongs to the thymidylate kinase family.

The catalysed reaction is dTMP + ATP = dTDP + ADP. Functionally, phosphorylation of dTMP to form dTDP in both de novo and salvage pathways of dTTP synthesis. This Shewanella loihica (strain ATCC BAA-1088 / PV-4) protein is Thymidylate kinase.